We begin with the raw amino-acid sequence, 212 residues long: Adenylate kinase (212 aa).

10–15 (GAGKGT) is a binding site for ATP. The interval 30 to 59 (AIGDIFRTIIKTSTSEAELINNYVKQGELI) is NMP. AMP contacts are provided by residues arginine 36, 57 to 59 (ELI), 85 to 88 (GYPR), and glutamine 92. The LID stretch occupies residues 122 to 160 (GRYSCKNCGKIYNRYFVQPKTDNVCDVCGSSTFDYRKDD). Arginine 123 is a binding site for ATP. Zn(2+)-binding residues include cysteine 126 and cysteine 129. 132–133 (IY) contributes to the ATP binding site. Cysteine 146 and cysteine 149 together coordinate Zn(2+). AMP-binding residues include arginine 157 and arginine 168. Residue lysine 196 participates in ATP binding.

The protein belongs to the adenylate kinase family. As to quaternary structure, monomer.

It is found in the cytoplasm. The catalysed reaction is AMP + ATP = 2 ADP. It functions in the pathway purine metabolism; AMP biosynthesis via salvage pathway; AMP from ADP: step 1/1. In terms of biological role, catalyzes the reversible transfer of the terminal phosphate group between ATP and AMP. Plays an important role in cellular energy homeostasis and in adenine nucleotide metabolism. In Rickettsia conorii (strain ATCC VR-613 / Malish 7), this protein is Adenylate kinase.